The following is a 136-amino-acid chain: ATP synthase epsilon chain (136 aa).

A disordered region spans residues 104 to 136 (AGMEGQPASPEKVKAQQQLNEARARMQASKSAD).

Belongs to the ATPase epsilon chain family. As to quaternary structure, F-type ATPases have 2 components, CF(1) - the catalytic core - and CF(0) - the membrane proton channel. CF(1) has five subunits: alpha(3), beta(3), gamma(1), delta(1), epsilon(1). CF(0) has three main subunits: a, b and c.

It is found in the cellular thylakoid membrane. Functionally, produces ATP from ADP in the presence of a proton gradient across the membrane. This chain is ATP synthase epsilon chain, found in Synechococcus sp. (strain CC9902).